A 418-amino-acid chain; its full sequence is Probable serine hydroxymethyltransferase (418 aa).

(6S)-5,6,7,8-tetrahydrofolate-binding positions include Leu-118 and 122-124 (GHL). The residue at position 226 (Lys-226) is an N6-(pyridoxal phosphate)lysine. 351–353 (SPF) contributes to the (6S)-5,6,7,8-tetrahydrofolate binding site.

Belongs to the SHMT family. As to quaternary structure, homodimer. Requires pyridoxal 5'-phosphate as cofactor.

The protein localises to the cytoplasm. It catalyses the reaction (6R)-5,10-methylene-5,6,7,8-tetrahydrofolate + glycine + H2O = (6S)-5,6,7,8-tetrahydrofolate + L-serine. It functions in the pathway one-carbon metabolism; tetrahydrofolate interconversion. Functionally, catalyzes the reversible interconversion of serine and glycine with tetrahydrofolate (THF) serving as the one-carbon carrier. This reaction serves as the major source of one-carbon groups required for the biosynthesis of purines, thymidylate, methionine, and other important biomolecules. This chain is Probable serine hydroxymethyltransferase, found in Mesomycoplasma hyopneumoniae (strain 232) (Mycoplasma hyopneumoniae).